The sequence spans 397 residues: Serpin B10 (397 aa).

Positions 74–77 match the Nuclear localization signal motif; the sequence is KKRK.

The protein belongs to the serpin family. Ov-serpin subfamily.

The protein resides in the nucleus. The protein localises to the cytoplasm. Protease inhibitor that may play a role in the regulation of protease activities during hematopoiesis and apoptosis induced by TNF. May regulate protease activities in the cytoplasm and in the nucleus. The polypeptide is Serpin B10 (SERPINB10) (Rhinolophus ferrumequinum (Greater horseshoe bat)).